The following is a 396-amino-acid chain: Putative pyridoxal phosphate-dependent acyltransferase (396 aa).

111-112 contributes to the pyridoxal 5'-phosphate binding site; the sequence is GF. His136 contributes to the substrate binding site. Pyridoxal 5'-phosphate-binding positions include Ser186, 211 to 214, and 241 to 244; these read DDAH and TLSK. Residue Lys244 is modified to N6-(pyridoxal phosphate)lysine. Residue Thr358 participates in substrate binding.

The protein belongs to the class-II pyridoxal-phosphate-dependent aminotransferase family. As to quaternary structure, homodimer. Requires pyridoxal 5'-phosphate as cofactor.

This is Putative pyridoxal phosphate-dependent acyltransferase from Bacillus anthracis.